The sequence spans 239 residues: Guanylate kinase (239 aa).

The Guanylate kinase-like domain maps to 19 to 197; sequence GLLIVVTGAS…AVSELLAVQQ (179 aa). An ATP-binding site is contributed by 26-33; the sequence is GASGVGKG.

It belongs to the guanylate kinase family.

It localises to the cytoplasm. It carries out the reaction GMP + ATP = GDP + ADP. Functionally, essential for recycling GMP and indirectly, cGMP. In Deinococcus radiodurans (strain ATCC 13939 / DSM 20539 / JCM 16871 / CCUG 27074 / LMG 4051 / NBRC 15346 / NCIMB 9279 / VKM B-1422 / R1), this protein is Guanylate kinase (gmk).